The sequence spans 332 residues: Diaminopimelate epimerase (332 aa).

Substrate is bound by residues Asn-13 and Asn-73. Cys-82 serves as the catalytic Proton donor. Residues 83-84, Asn-172, Asn-209, and 227-228 each bind substrate; these read GN and ER. Residue Cys-236 is the Proton acceptor of the active site. 237–238 is a substrate binding site; the sequence is GT.

The protein belongs to the diaminopimelate epimerase family. As to quaternary structure, homodimer.

The protein resides in the cytoplasm. It carries out the reaction (2S,6S)-2,6-diaminopimelate = meso-2,6-diaminopimelate. It participates in amino-acid biosynthesis; L-lysine biosynthesis via DAP pathway; DL-2,6-diaminopimelate from LL-2,6-diaminopimelate: step 1/1. Functionally, catalyzes the stereoinversion of LL-2,6-diaminopimelate (L,L-DAP) to meso-diaminopimelate (meso-DAP), a precursor of L-lysine and an essential component of the bacterial peptidoglycan. The polypeptide is Diaminopimelate epimerase (Lactiplantibacillus plantarum (strain ATCC BAA-793 / NCIMB 8826 / WCFS1) (Lactobacillus plantarum)).